The chain runs to 60 residues: Phycobilisome degradation protein NblA homolog 2 (60 aa).

This sequence to Synechococcus PCC 7942 NblA and some, to chloroplast ycf18.

This is Phycobilisome degradation protein NblA homolog 2 from Synechocystis sp. (strain ATCC 27184 / PCC 6803 / Kazusa).